The primary structure comprises 181 residues: Oligoribonuclease (181 aa).

The region spanning 8–171 (LIWIDLEMTG…QDIQESIAEL (164 aa)) is the Exonuclease domain. Tyr129 is an active-site residue.

It belongs to the oligoribonuclease family.

It localises to the cytoplasm. Its function is as follows. 3'-to-5' exoribonuclease specific for small oligoribonucleotides. The protein is Oligoribonuclease of Shewanella sp. (strain ANA-3).